The sequence spans 724 residues: Degenerin mec-10 (724 aa).

Residues 1-15 are compositionally biased toward polar residues; sequence MNRNPRMSKFQPNPR. The disordered stretch occupies residues 1 to 22; sequence MNRNPRMSKFQPNPRSRSRFQD. The Cytoplasmic portion of the chain corresponds to 1–122; that stretch reads MNRNPRMSKF…GQAPNSLYRA (122 aa). A helical membrane pass occupies residues 123–143; the sequence is AWVFLLLICAIQFINQAVAVI. Over 144-684 the chain is Extracellular; that stretch reads QKYQKMDKIT…FGGHLGLWSG (541 aa). A disordered region spans residues 229–265; that stretch reads KRGAGEKGTFEPANSACECDEEDGSNECEERSTEKPS. The segment covering 246–255 has biased composition (acidic residues); that stretch reads ECDEEDGSNE. A compositionally biased stretch (basic and acidic residues) spans 256–265; sequence CEERSTEKPS. N-linked (GlcNAc...) asparagine glycosylation is found at N293, N369, N463, N605, and N624. The helical transmembrane segment at 685-705 threads the bilayer; it reads VSVMTCCEFVCLAFELIYMAI. The Cytoplasmic segment spans residues 706–724; sequence AHHINQQRIRRRENAANEY.

The protein belongs to the amiloride-sensitive sodium channel (TC 1.A.6) family. In terms of assembly, component of a non-voltage-gated amiloride-sensitive cation channel complex (also called the degenerin channel complex) composed of at least the mec-2, mec-4, mec-6 and mec-10 subunits; the complex mediates mechanotransduction in touch cells. Interacts with mec-4 and mec-6.

It is found in the cell membrane. Subunit of an amiloride-sensitive cation channel (degenerin channel complex) permeable for sodium, potassium, lithium and N-methylglucamine, and required for mechanosensory transduction (touch sensitivity). Negatively regulates the turning step of male mating behavior. The chain is Degenerin mec-10 from Caenorhabditis elegans.